The sequence spans 323 residues: Melanocortin receptor 3 (323 aa).

The Extracellular segment spans residues 1-37 (MNSSCCPSSSYPTLPNLSQHPAAPSASNRSGSGFCEQ). Asparagine 2, asparagine 16, and asparagine 28 each carry an N-linked (GlcNAc...) asparagine glycan. The chain crosses the membrane as a helical span at residues 38–63 (VFIKPEVFLALGIVSLMENILVILAV). Residues 64–75 (VRNGNLHSPMYF) are Cytoplasmic-facing. Residues 76 to 100 (FLCSLAAADMLVSLSNSLETIMIVV) traverse the membrane as a helical segment. Over 101-118 (INSDSLTLEDQFIQHMDN) the chain is Extracellular. Residues 119–140 (IFDSMICISLVASICNLLAIAV) form a helical membrane-spanning segment. Topologically, residues 141–160 (DRYVTIFYALRYHSIMTVRK) are cytoplasmic. The helical transmembrane segment at 161 to 181 (ALSLIVAIWVCCGICGVMFIV) threads the bilayer. Residues 182–186 (YSESK) lie on the Extracellular side of the membrane. The helical transmembrane segment at 187-210 (MVIVCLITMFFAMVLLMGTLYIHM) threads the bilayer. Over 211–245 (FLFARLHVQRIAALPPADGVAPQQHSCMKGAVTIT) the chain is Cytoplasmic. Residues 246–268 (ILLGVFIFCWAPFFLHLVLIITC) form a helical membrane-spanning segment. Residues 269-277 (PTNPYCICY) are Extracellular-facing. A helical membrane pass occupies residues 278 to 301 (TAHFNTYLVLIMCNSVIDPLIYAF). The Cytoplasmic portion of the chain corresponds to 302 to 323 (RSLELRNTFKEILCGCNGMNVG). Cysteine 315 carries the S-palmitoyl cysteine lipid modification.

It belongs to the G-protein coupled receptor 1 family. In terms of tissue distribution, brain.

The protein resides in the cell membrane. Functionally, receptor for MSH (alpha, beta and gamma) and ACTH. This receptor is mediated by G proteins which activate adenylate cyclase. Required for expression of anticipatory patterns of activity and wakefulness during periods of limited nutrient availability and for the normal regulation of circadian clock activity in the brain. The polypeptide is Melanocortin receptor 3 (Mc3r) (Rattus norvegicus (Rat)).